The primary structure comprises 1545 residues: MSLSFCGNNISSYNIYHGVLQNPCFVDALNLVPHVFLLFITFPILFIGWGSQSSKVQIHHNTWLHFPGHNLRWILTFALLFVHVCEIAEGIVSDSQRASRHLHLFMPAVMGFVATTTSIVYYHNIETSNFPKLLLALFLYWVMAFITKTIKLVKYWQLGWGMSDLRFCITGVMVILNGLLMAVEINVIRVRRYVFFMNPQKVKPPEDLQDLGVRFLQPFVNLLSKATYWWMNTLIISAHRKPIDLKAIGKLPIAMRAVTNYVCLKEAYEEQKKKAADHPNRTPSIWLAMYRAFGRPILLSSTFRYLADLLGFAGPLCISGIVQRVNEPKNNTTRFSETLSSKEFLENAHVLAVLLFLALILQRTFLQASYYVTIETGINLRGALLAMIYNKILRLSTSNLSMGEMTLGQINNLVAIETNQLMWFLFLCPNLWAMPVQIIMGVILLYNLLGSSALVGAAVIVLLAPIQYFIATKLAEAQKSTLDYSTERLKKTNEILKGIKLLKLYAWEHIFCKSVEETRMKELSSLKTFALYTSLSIFMNAAIPIAAVLATFVTHAYASGNNLKPAEAFASLSLFHILVTPLFLLSTVVRFAVKAIISVQKLNEFLLSDEIGEDSWRTGEGTLPFESCKKHTGVQSKPINRKQPGRYHLDNYEQARRLRPAETEDVAIKVTNGYFSWGSGLATLSNIDIRIPTGQLTMIVGQVGCGKSSLLLAILGEMQTLEGKVYWNNVNESEPSFEATRSRSRYSVAYAAQKPWLLNATVEENITFGSSFNRQRYKAVTDACSLQPDIDLLPFGDQTEIGERGINLSGGQRQRICVARALYQNTNIVFLDDPFSALDIHLSDHLMQEGILKFLQDDKRTVVLVTHKLQYLTHADWIIAMKDGSVLREGTLKDIQTKDVELYEHWKTLMNRQDQELEKDMEADQTTLERKTLRRAMYSREAKAQMEDEDEEEEEEEDEDDNMSTVMRLRTKMPWKTCWWYLTSGGFFLLFLMIFSKLLKHSVIVAIDYWLATWTSEYSINDPGKADQTFYVAGFSILCGAGIFLCLVTSLTVEWMGLTAAKNLHHNLLNKIILGPIRFFDTTPLGLILNRFSADTNIIDQHIPPTLESLTRSTLLCLSAIGMISYATPVFLIALAPLGVAFYFIQKYFRVASKDLQELDDSTQLPLLCHFSETAEGLTTIRAFRHETRFKQRMLELTDTNNIAYLFLSAANRWLEVRTDYLGACIVLTASIASISGSSNSGLVGLGLLYALTITNYLNWVVRNLADLEVQMGAVKKVNSFLTMESENYEGTMDPSQVPEHWPQEGEIKIHDLCVRYENNLKPVLKHVKAYIKPGQKVGICGRTGSGKSSLSLAFFRMVDIFDGKIVIDGIDISKLPLHTLRSRLSIILQDPILFSGSIRFNLDPECKCTDDRLWEALEIAQLKNMVKSLPGGLDATVTEGGENFSVGQRQLFCLARAFVRKSSILIMDEATASIDMATENILQKVVMTAFADRTVVTIAHRVSSIMDAGLVLVFSEGILVECDTGPNLLQHKNGLFSTLVMTNK.

At 1–30 (MSLSFCGNNISSYNIYHGVLQNPCFVDALN) the chain is on the extracellular side. N-linked (GlcNAc...) asparagine glycosylation is present at Asn9. Residues 31 to 51 (LVPHVFLLFITFPILFIGWGS) traverse the membrane as a helical segment. Topologically, residues 52-72 (QSSKVQIHHNTWLHFPGHNLR) are cytoplasmic. A helical membrane pass occupies residues 73-93 (WILTFALLFVHVCEIAEGIVS). The Extracellular segment spans residues 94–101 (DSQRASRH). A helical transmembrane segment spans residues 102–122 (LHLFMPAVMGFVATTTSIVYY). The Cytoplasmic segment spans residues 123 to 132 (HNIETSNFPK). The chain crosses the membrane as a helical span at residues 133-153 (LLLALFLYWVMAFITKTIKLV). Over 154–167 (KYWQLGWGMSDLRF) the chain is Extracellular. A helical transmembrane segment spans residues 168-188 (CITGVMVILNGLLMAVEINVI). Over 189 to 301 (RVRRYVFFMN…AFGRPILLSS (113 aa)) the chain is Cytoplasmic. Positions 297-594 (ILLSSTFRYL…LSTVVRFAVK (298 aa)) constitute an ABC transmembrane type-1 1 domain. Residues 302–322 (TFRYLADLLGFAGPLCISGIV) form a helical membrane-spanning segment. Residues 323 to 347 (QRVNEPKNNTTRFSETLSSKEFLEN) lie on the Extracellular side of the membrane. 2 N-linked (GlcNAc...) asparagine glycosylation sites follow: Asn330 and Asn331. A helical membrane pass occupies residues 348–368 (AHVLAVLLFLALILQRTFLQA). At 369–420 (SYYVTIETGINLRGALLAMIYNKILRLSTSNLSMGEMTLGQINNLVAIETNQ) the chain is on the cytoplasmic side. A helical membrane pass occupies residues 421–441 (LMWFLFLCPNLWAMPVQIIMG). The Extracellular segment spans residues 442 to 452 (VILLYNLLGSS). Residues 453 to 473 (ALVGAAVIVLLAPIQYFIATK) traverse the membrane as a helical segment. The Cytoplasmic portion of the chain corresponds to 474–528 (LAEAQKSTLDYSTERLKKTNEILKGIKLLKLYAWEHIFCKSVEETRMKELSSLKT). The helical transmembrane segment at 529-549 (FALYTSLSIFMNAAIPIAAVL) threads the bilayer. At 550-568 (ATFVTHAYASGNNLKPAEA) the chain is on the extracellular side. Residues 569-589 (FASLSLFHILVTPLFLLSTVV) traverse the membrane as a helical segment. Residues 590-986 (RFAVKAIISV…TCWWYLTSGG (397 aa)) are Cytoplasmic-facing. One can recognise an ABC transporter 1 domain in the interval 668-908 (IKVTNGYFSW…DVELYEHWKT (241 aa)). ATP is bound at residue 701–708 (GQVGCGKS). Residues 940 to 963 (REAKAQMEDEDEEEEEEEDEDDNM) are disordered. Over residues 947–962 (EDEDEEEEEEEDEDDN) the composition is skewed to acidic residues. The helical transmembrane segment at 987 to 1007 (FFLLFLMIFSKLLKHSVIVAI) threads the bilayer. The region spanning 990-1270 (LFLMIFSKLL…VVRNLADLEV (281 aa)) is the ABC transmembrane type-1 2 domain. Topologically, residues 1008-1030 (DYWLATWTSEYSINDPGKADQTF) are extracellular. A helical transmembrane segment spans residues 1031 to 1051 (YVAGFSILCGAGIFLCLVTSL). The Cytoplasmic segment spans residues 1052–1123 (TVEWMGLTAA…TLLCLSAIGM (72 aa)). A helical transmembrane segment spans residues 1124-1144 (ISYATPVFLIALAPLGVAFYF). The Extracellular portion of the chain corresponds to 1145–1241 (IQKYFRVASK…IASISGSSNS (97 aa)). Residues 1242-1262 (GLVGLGLLYALTITNYLNWVV) traverse the membrane as a helical segment. The Cytoplasmic portion of the chain corresponds to 1263 to 1545 (RNLADLEVQM…LFSTLVMTNK (283 aa)). In terms of domain architecture, ABC transporter 2 spans 1308 to 1542 (IKIHDLCVRY…KNGLFSTLVM (235 aa)). 1342–1349 (GRTGSGKS) provides a ligand contact to ATP.

It belongs to the ABC transporter superfamily. ABCC family. Conjugate transporter (TC 3.A.1.208) subfamily. In terms of assembly, interacts with KCNJ11. Interacts with KCNJ8. Expressed at high levels in heart, skeletal muscle and ovary. Moderate levels are found in brain, tongue and pancreatic islets. Low levels are found in lung, testis and adrenal gland. Expressed at very low levels in stomach, colon, thyroid and pituitary.

It localises to the membrane. In terms of biological role, subunit of ATP-sensitive potassium channels (KATP). Can form cardiac and smooth muscle-type KATP channels with KCNJ11. KCNJ11 forms the channel pore while ABCC9 is required for activation and regulation. Can form a sulfonylurea-sensitive but ATP-insensitive potassium channel with KCNJ8. This is ATP-binding cassette sub-family C member 9 (Abcc9) from Rattus norvegicus (Rat).